We begin with the raw amino-acid sequence, 401 residues long: Chalcone synthase 2 (401 aa).

Cys-168 is a catalytic residue.

It belongs to the thiolase-like superfamily. Chalcone/stilbene synthases family.

The catalysed reaction is (E)-4-coumaroyl-CoA + 3 malonyl-CoA + 3 H(+) = 2',4,4',6'-tetrahydroxychalcone + 3 CO2 + 4 CoA. Its pathway is secondary metabolite biosynthesis; flavonoid biosynthesis. Functionally, the primary product of this enzyme is 4,2',4',6'-tetrahydroxychalcone (also termed naringenin-chalcone or chalcone) which can under specific conditions spontaneously isomerize into naringenin. The polypeptide is Chalcone synthase 2 (CHS2) (Sorghum bicolor (Sorghum)).